We begin with the raw amino-acid sequence, 307 residues long: Ubiquitin recognition factor in ER-associated degradation protein 1 (307 aa).

An N-acetylmethionine modification is found at methionine 1. 5 positions are modified to phosphoserine: serine 129, serine 231, serine 245, serine 247, and serine 299. 2 disordered regions span residues 231–256 (SGNR…DIKR) and 288–307 (GRFV…GRKP).

It belongs to the UFD1 family. In terms of assembly, heterodimer with NPLOC4, this heterodimer binds VCP and inhibits Golgi membrane fusion. Interacts with USP13. Interacts with ZFAND2B; probably through VCP. As to expression, found in adult heart, skeletal muscle and pancreas, and in fetal liver and kidney.

It localises to the nucleus. It is found in the cytoplasm. The protein resides in the cytosol. The protein operates within protein degradation; proteasomal ubiquitin-dependent pathway. Functionally, essential component of the ubiquitin-dependent proteolytic pathway which degrades ubiquitin fusion proteins. The ternary complex containing UFD1, VCP and NPLOC4 binds ubiquitinated proteins and is necessary for the export of misfolded proteins from the ER to the cytoplasm, where they are degraded by the proteasome. The NPLOC4-UFD1-VCP complex regulates spindle disassembly at the end of mitosis and is necessary for the formation of a closed nuclear envelope. It may be involved in the development of some ectoderm-derived structures. Acts as a negative regulator of type I interferon production via the complex formed with VCP and NPLOC4, which binds to RIGI and recruits RNF125 to promote ubiquitination and degradation of RIGI. The protein is Ubiquitin recognition factor in ER-associated degradation protein 1 of Homo sapiens (Human).